Here is a 244-residue protein sequence, read N- to C-terminus: 1-(5-phosphoribosyl)-5-[(5-phosphoribosylamino)methylideneamino] imidazole-4-carboxamide isomerase (244 aa).

Catalysis depends on Asp-10, which acts as the Proton acceptor. Catalysis depends on Asp-129, which acts as the Proton donor.

Belongs to the HisA/HisF family.

The protein resides in the cytoplasm. It carries out the reaction 1-(5-phospho-beta-D-ribosyl)-5-[(5-phospho-beta-D-ribosylamino)methylideneamino]imidazole-4-carboxamide = 5-[(5-phospho-1-deoxy-D-ribulos-1-ylimino)methylamino]-1-(5-phospho-beta-D-ribosyl)imidazole-4-carboxamide. Its pathway is amino-acid biosynthesis; L-histidine biosynthesis; L-histidine from 5-phospho-alpha-D-ribose 1-diphosphate: step 4/9. This chain is 1-(5-phosphoribosyl)-5-[(5-phosphoribosylamino)methylideneamino] imidazole-4-carboxamide isomerase, found in Rhodococcus erythropolis (strain PR4 / NBRC 100887).